The chain runs to 511 residues: Cysteine--tRNA ligase 2, cytoplasmic (511 aa).

Cys-34 is a Zn(2+) binding site. A 'HIGH' region motif is present at residues 36 to 46; sequence ITAYDFSHIGH. Residues Cys-214, His-239, and Glu-243 each contribute to the Zn(2+) site. Residues 271-275 carry the 'KMSKS' region motif; the sequence is KMAKS. Lys-274 lines the ATP pocket. TPR repeat units lie at residues 315-348 and 368-401; these read ESSSEALYYVYQTLQDLDEGLSPYQDALSEDGGK and SKMLDDLNTAHILTGAYQDALKFINASLSKLKKM.

Belongs to the class-I aminoacyl-tRNA synthetase family. Zn(2+) is required as a cofactor.

It localises to the cytoplasm. The protein localises to the cytosol. The enzyme catalyses tRNA(Cys) + L-cysteine + ATP = L-cysteinyl-tRNA(Cys) + AMP + diphosphate. This chain is Cysteine--tRNA ligase 2, cytoplasmic, found in Arabidopsis thaliana (Mouse-ear cress).